The following is a 483-amino-acid chain: Glutamate--tRNA ligase (483 aa).

Residues 14–24 carry the 'HIGH' region motif; sequence PSPTGDPHVGT. A 'KMSKS' region motif is present at residues 253-257; the sequence is KISKR. Lys256 provides a ligand contact to ATP.

It belongs to the class-I aminoacyl-tRNA synthetase family. Glutamate--tRNA ligase type 1 subfamily. As to quaternary structure, monomer.

The protein localises to the cytoplasm. The catalysed reaction is tRNA(Glu) + L-glutamate + ATP = L-glutamyl-tRNA(Glu) + AMP + diphosphate. Its function is as follows. Catalyzes the attachment of glutamate to tRNA(Glu) in a two-step reaction: glutamate is first activated by ATP to form Glu-AMP and then transferred to the acceptor end of tRNA(Glu). This chain is Glutamate--tRNA ligase, found in Deinococcus radiodurans (strain ATCC 13939 / DSM 20539 / JCM 16871 / CCUG 27074 / LMG 4051 / NBRC 15346 / NCIMB 9279 / VKM B-1422 / R1).